A 263-amino-acid chain; its full sequence is Flagellar brake protein YcgR (263 aa).

The interval 1-21 is disordered; it reads MAELSTPSPASPAPLDGGRGD. The PilZ domain occupies 133–250; sequence QRREFYRLQV…DTRIQRYIFK (118 aa).

This sequence belongs to the YcgR family. In terms of assembly, monomer. Interacts with the flagellar basal bodies.

It is found in the bacterial flagellum basal body. Functionally, acts as a flagellar brake, regulating swimming and swarming in a bis-(3'-5') cyclic diguanylic acid (c-di-GMP)-dependent manner. Binds 1 c-di-GMP dimer per subunit. Increasing levels of c-di-GMP lead to decreased motility. The polypeptide is Flagellar brake protein YcgR (Thauera aminoaromatica).